Here is a 460-residue protein sequence, read N- to C-terminus: Argininosuccinate lyase (460 aa).

The protein belongs to the lyase 1 family. Argininosuccinate lyase subfamily.

Its subcellular location is the cytoplasm. The catalysed reaction is 2-(N(omega)-L-arginino)succinate = fumarate + L-arginine. The protein operates within amino-acid biosynthesis; L-arginine biosynthesis; L-arginine from L-ornithine and carbamoyl phosphate: step 3/3. The chain is Argininosuccinate lyase from Campylobacter jejuni subsp. doylei (strain ATCC BAA-1458 / RM4099 / 269.97).